The chain runs to 164 residues: Interferon gamma (164 aa).

Residues 1 to 19 (MTCQTYCLFVLSVIMIYFG) form the signal peptide. 3 N-linked (GlcNAc...) asparagine glycosylation sites follow: Asn-42, Asn-61, and Asn-95.

The protein belongs to the type II (or gamma) interferon family. In terms of assembly, homodimer.

It localises to the secreted. In terms of biological role, produced by lymphocytes activated by specific antigens or mitogens. IFN-gamma, in addition to having antiviral activity, has important immunoregulatory functions. It is a potent activator of macrophages, it has antiproliferative effects on transformed cells and it can potentiate the antiviral and antitumor effects of the type I interferons. This is Interferon gamma (IFNG) from Anas platyrhynchos (Mallard).